We begin with the raw amino-acid sequence, 162 residues long: Cyclic pyranopterin monophosphate synthase (162 aa).

Substrate-binding positions include 75–77 (LCH) and 113–114 (ME). D128 is an active-site residue.

Belongs to the MoaC family. In terms of assembly, homohexamer; trimer of dimers.

The enzyme catalyses (8S)-3',8-cyclo-7,8-dihydroguanosine 5'-triphosphate = cyclic pyranopterin phosphate + diphosphate. It functions in the pathway cofactor biosynthesis; molybdopterin biosynthesis. In terms of biological role, catalyzes the conversion of (8S)-3',8-cyclo-7,8-dihydroguanosine 5'-triphosphate to cyclic pyranopterin monophosphate (cPMP). This is Cyclic pyranopterin monophosphate synthase from Burkholderia orbicola (strain MC0-3).